A 158-amino-acid polypeptide reads, in one-letter code: Putative pre-16S rRNA nuclease (158 aa).

The protein belongs to the YqgF nuclease family.

The protein localises to the cytoplasm. Its function is as follows. Could be a nuclease involved in processing of the 5'-end of pre-16S rRNA. The protein is Putative pre-16S rRNA nuclease of Hahella chejuensis (strain KCTC 2396).